A 200-amino-acid polypeptide reads, in one-letter code: Recombination protein RecR (200 aa).

The C4-type zinc-finger motif lies at 57-72; that stretch reads CSECRTFTEEDTCAIC. One can recognise a Toprim domain in the interval 81-176; it reads GELCIVESPA…SASRIAHGVP (96 aa).

This sequence belongs to the RecR family.

May play a role in DNA repair. It seems to be involved in an RecBC-independent recombinational process of DNA repair. It may act with RecF and RecO. This chain is Recombination protein RecR, found in Aliivibrio salmonicida (strain LFI1238) (Vibrio salmonicida (strain LFI1238)).